Consider the following 560-residue polypeptide: RNA polymerase-associated protein C651.09c (560 aa).

Disordered regions lie at residues 15–74 (DDSD…KNPY) and 128–207 (YMAQ…KVEQ). Residues 148–171 (GKRDKLTELKKRRQERSARSVSER) show a composition bias toward basic and acidic residues. Positions 180 to 195 (DYEEQNESEKSEEEEG) are enriched in acidic residues. S197 is modified (phosphoserine). The 132-residue stretch at 214–345 (SANLYDLNAI…KLNDLRDMSK (132 aa)) folds into the Plus3 domain. Residues 387 to 456 (AGNAELVKEI…RRRLSAAATA (70 aa)) are a coiled coil. Positions 440–449 (EQRMNEERRR) are enriched in basic and acidic residues. The disordered stretch occupies residues 440–486 (EQRMNEERRRLSAAATATPMSAPTSVLTGTSPQPSPSLSTSIMSTPK). The span at 451-480 (SAAATATPMSAPTSVLTGTSPQPSPSLSTS) shows a compositional bias: low complexity. A phosphoserine mark is found at S502 and S506.

As to quaternary structure, component of the PAF1 complex.

It localises to the nucleus. Its subcellular location is the nucleoplasm. The PAF1 complex is a multifunctional complex. Involved in transcription initiation via genetic interactions with TATA-binding proteins. Involved in elongation. Also has a role in transcription-coupled histone modification. Important for TATA site selection by TBP. Directly or indirectly regulates the DNA-binding properties of the TATA box-binding protein, and the relative activities of different TATA elements. In Schizosaccharomyces pombe (strain 972 / ATCC 24843) (Fission yeast), this protein is RNA polymerase-associated protein C651.09c.